The primary structure comprises 367 residues: Lysophosphatidic acid receptor 5 (367 aa).

Topologically, residues 1-25 (MQANSSAKSLPTECPDYQPIHHLHL) are extracellular. N-linked (GlcNAc...) asparagine glycosylation is present at asparagine 4. Residues 26–46 (VVYSVVLAAGLPLNALALWVF) traverse the membrane as a helical segment. Residues 47-54 (LRALRVHS) are Cytoplasmic-facing. A helical membrane pass occupies residues 55–75 (VVSVYMCNLAASDLLFTLSLP). The Extracellular portion of the chain corresponds to 76–95 (LRLSYYARHYWPFPDFLCQL). A disulfide bridge links cysteine 93 with cysteine 174. The chain crosses the membrane as a helical span at residues 96-116 (AGAVFQMNMYGSCIFLTLINV). Residues 117–135 (DRYAAIVHPLRLRHLRRPR) lie on the Cytoplasmic side of the membrane. The helical transmembrane segment at 136-156 (VARLLCLGVWALILVFAVPTI) threads the bilayer. Over 157–186 (LAHQPSSCARDGRNVSLCFESFSDKLWKGS) the chain is Extracellular. The N-linked (GlcNAc...) asparagine glycan is linked to asparagine 170. The helical transmembrane segment at 187-207 (LLPLLLLAEALGFLLPLAAVV) threads the bilayer. The Cytoplasmic portion of the chain corresponds to 208–238 (YSSGRVFWTLARPDATRSQRRRKTVRLLLAS). The helical transmembrane segment at 239 to 259 (LVIFLLCFVPYNATLAVYGLL) threads the bilayer. The Extracellular portion of the chain corresponds to 260-275 (RGEVVPASSEARKKVR). A helical transmembrane segment spans residues 276–296 (GVLMVMVLLAGANCVLDPLVY). The Cytoplasmic portion of the chain corresponds to 297–367 (YFSAEGFRNT…FTPSHEDSSF (71 aa)). Low complexity predominate over residues 332-350 (LTETAHASTLTTTSQGQLQ). A disordered region spans residues 332-367 (LTETAHASTLTTTSQGQLQPSDPRSSFTPSHEDSSF). Residues 351-360 (PSDPRSSFTP) show a composition bias toward polar residues.

The protein belongs to the G-protein coupled receptor 1 family.

Its subcellular location is the cell membrane. Functionally, receptor for lysophosphatidic acid (LPA), a mediator of diverse cellular activities. The sequence is that of Lysophosphatidic acid receptor 5 (LPAR5) from Bos taurus (Bovine).